A 245-amino-acid chain; its full sequence is MNKNIKYSQNFLTSEKVLNQIIKQLNLKETDTVYEIGTGKGHLTTKLAKISKQVTSIELDSHLFNLSSEKLKSNTRVTLIHQDILQFQFPNKQRYKIVGNIPYHLSTQIIKKVVFESHASDIYLIVEEGFYKRTLDIHRTLGLLLHTQVSIQQLLKLPAECFHPKPRVNSVLIKLTRHTTDVPDKYWKLYTYFVSKWVNREYRQLFTKNQFHQAMKHAKVNNLSTVTYEQVLSIFNSYLLFNGRK.

Positions 10, 12, 37, 58, 83, and 100 each coordinate S-adenosyl-L-methionine.

The protein belongs to the class I-like SAM-binding methyltransferase superfamily. rRNA adenine N(6)-methyltransferase family.

The enzyme catalyses adenosine(2085) in 23S rRNA + 2 S-adenosyl-L-methionine = N(6)-dimethyladenosine(2085) in 23S rRNA + 2 S-adenosyl-L-homocysteine + 2 H(+). In terms of biological role, this protein produces a dimethylation of the adenine residue at position 2085 in 23S rRNA, resulting in reduced affinity between ribosomes and macrolide-lincosamide-streptogramin B antibiotics. The chain is rRNA adenine N-6-methyltransferase (ermBC) from Escherichia coli.